Here is a 274-residue protein sequence, read N- to C-terminus: Cytochrome b-c1 complex subunit Rieske, mitochondrial (274 aa).

Residues 79–103 (SHTDVKVPDFSEYRRLEVLDSTKSS) lie on the Mitochondrial matrix side of the membrane. The helical transmembrane segment at 104–140 (RESSEARKGFSYLVTGVTTVGVAYAAKNAVTQFVSSM) threads the bilayer. The Mitochondrial intermembrane portion of the chain corresponds to 141-274 (SASADVLALA…FTSDDMVIVG (134 aa)). One can recognise a Rieske domain in the interval 187 to 272 (EAAVELSQLR…YEFTSDDMVI (86 aa)). [2Fe-2S] cluster contacts are provided by Cys217, His219, Cys236, His239, and Ser241. A disulfide bridge connects residues Cys222 and Cys238.

This sequence belongs to the Rieske iron-sulfur protein family. In terms of assembly, component of the ubiquinol-cytochrome c oxidoreductase (cytochrome b-c1 complex, complex III, CIII), a multisubunit enzyme composed of 11 subunits. The complex is composed of 3 respiratory subunits cytochrome b, cytochrome c1 and Rieske protein UQCRFS1, 2 core protein subunits UQCRC1/QCR1 and UQCRC2/QCR2, and 6 low-molecular weight protein subunits UQCRH/QCR6, UQCRB/QCR7, UQCRQ/QCR8, UQCR10/QCR9, UQCR11/QCR10 and subunit 9, the cleavage product of Rieske protein UQCRFS1. The complex exists as an obligatory dimer and forms supercomplexes (SCs) in the inner mitochondrial membrane with NADH-ubiquinone oxidoreductase (complex I, CI) and cytochrome c oxidase (complex IV, CIV), resulting in different assemblies (supercomplex SCI(1)III(2)IV(1) and megacomplex MCI(2)III(2)IV(2)). Incorporation of the Rieske protein UQCRFS1 is the penultimate step in complex III assembly. Interacts with TTC19, which is involved in the clearance of UQCRFS1 fragments. Component of the ubiquinol-cytochrome c oxidoreductase (cytochrome b-c1 complex, complex III, CIII). Subunit 9 corresponds to the mitochondrial targeting sequence (MTS) of Rieske protein UQCRFS1. It is retained after processing and incorporated inside complex III, where it remains bound to the complex and localizes between the 2 core subunits UQCRC1/QCR1 and UQCRC2/QCR2. It depends on [2Fe-2S] cluster as a cofactor. In terms of processing, proteolytic processing is necessary for the correct insertion of UQCRFS1 in the complex III dimer. Several fragments are generated during UQCRFS1 insertion, most probably due to the endogenous matrix-processing peptidase (MPP) activity of the 2 core protein subunits UQCRC1/QCR1 and UQCRC2/QCR2, which are homologous to the 2 mitochondrial-processing peptidase (MPP) subunits beta-MPP and alpha-MPP respectively. The action of the protease is also necessary for the clearance of the UQCRFS1 fragments.

It localises to the mitochondrion inner membrane. It catalyses the reaction a quinol + 2 Fe(III)-[cytochrome c](out) = a quinone + 2 Fe(II)-[cytochrome c](out) + 2 H(+)(out). Functionally, component of the ubiquinol-cytochrome c oxidoreductase, a multisubunit transmembrane complex that is part of the mitochondrial electron transport chain which drives oxidative phosphorylation. The respiratory chain contains 3 multisubunit complexes succinate dehydrogenase (complex II, CII), ubiquinol-cytochrome c oxidoreductase (cytochrome b-c1 complex, complex III, CIII) and cytochrome c oxidase (complex IV, CIV), that cooperate to transfer electrons derived from NADH and succinate to molecular oxygen, creating an electrochemical gradient over the inner membrane that drives transmembrane transport and the ATP synthase. The cytochrome b-c1 complex catalyzes electron transfer from ubiquinol to cytochrome c, linking this redox reaction to translocation of protons across the mitochondrial inner membrane, with protons being carried across the membrane as hydrogens on the quinol. In the process called Q cycle, 2 protons are consumed from the matrix, 4 protons are released into the intermembrane space and 2 electrons are passed to cytochrome c. The Rieske protein is a catalytic core subunit containing a [2Fe-2S] iron-sulfur cluster. It cycles between 2 conformational states during catalysis to transfer electrons from the quinol bound in the Q(0) site in cytochrome b to cytochrome c1. Incorporation of UQCRFS1 is the penultimate step in complex III assembly. Its function is as follows. Component of the ubiquinol-cytochrome c oxidoreductase (cytochrome b-c1 complex, complex III, CIII). UQCRFS1 undergoes proteolytic processing once it is incorporated in the complex III dimer. One of the fragments, called subunit 9, corresponds to its mitochondrial targeting sequence (MTS). The proteolytic processing is necessary for the correct insertion of UQCRFS1 in the complex III dimer, but the persistence of UQCRFS1-derived fragments may prevent newly imported UQCRFS1 to be processed and assembled into complex III and is detrimental for the complex III structure and function. In Pan paniscus (Pygmy chimpanzee), this protein is Cytochrome b-c1 complex subunit Rieske, mitochondrial (UQCRFS1).